Here is a 262-residue protein sequence, read N- to C-terminus: Methylthioribulose-1-phosphate dehydratase (262 aa).

Cys-115 lines the substrate pocket. The Zn(2+) site is built by His-133 and His-135. Catalysis depends on Glu-158, which acts as the Proton donor/acceptor. Residue His-223 coordinates Zn(2+).

This sequence belongs to the aldolase class II family. MtnB subfamily. Zn(2+) is required as a cofactor.

It localises to the cytoplasm. It carries out the reaction 5-(methylsulfanyl)-D-ribulose 1-phosphate = 5-methylsulfanyl-2,3-dioxopentyl phosphate + H2O. It functions in the pathway amino-acid biosynthesis; L-methionine biosynthesis via salvage pathway; L-methionine from S-methyl-5-thio-alpha-D-ribose 1-phosphate: step 2/6. Its function is as follows. Catalyzes the dehydration of methylthioribulose-1-phosphate (MTRu-1-P) into 2,3-diketo-5-methylthiopentyl-1-phosphate (DK-MTP-1-P). This Meyerozyma guilliermondii (strain ATCC 6260 / CBS 566 / DSM 6381 / JCM 1539 / NBRC 10279 / NRRL Y-324) (Yeast) protein is Methylthioribulose-1-phosphate dehydratase.